Here is a 143-residue protein sequence, read N- to C-terminus: MLVPKRVKYRRVHRGHMRGEAKGGRTVAFGDYGLQSLENNWITNRQIEAARIAITRYMKRGGKVWIKIFPQKSYTSKGVGVRMGNGKGAPEGWVAPTKRGTIMFEVGGVSEAVAKEALRLAMHKLPVKAKIVSKAEASKEVNA.

Belongs to the universal ribosomal protein uL16 family. In terms of assembly, part of the 50S ribosomal subunit.

Its function is as follows. Binds 23S rRNA and is also seen to make contacts with the A and possibly P site tRNAs. In Oenococcus oeni (strain ATCC BAA-331 / PSU-1), this protein is Large ribosomal subunit protein uL16.